The sequence spans 336 residues: Dihydrolipoyl dehydrogenase (336 aa).

Residues 34 to 42, Lys-51, and Gly-115 each bind FAD; that span reads EKEVVGGIC. Residues Cys-42 and Cys-47 are joined by a disulfide bond. Residues 180–184, Glu-203, Val-237, and 264–267 each bind NAD(+); these read GGGVI and SVGT. FAD-binding residues include Asp-304 and Ala-312.

This sequence belongs to the class-I pyridine nucleotide-disulfide oxidoreductase family. In terms of assembly, homodimer. Requires FAD as cofactor.

It is found in the cytoplasm. It carries out the reaction N(6)-[(R)-dihydrolipoyl]-L-lysyl-[protein] + NAD(+) = N(6)-[(R)-lipoyl]-L-lysyl-[protein] + NADH + H(+). Functionally, lipoamide dehydrogenase is a component of the alpha-ketoacid dehydrogenase complexes. The sequence is that of Dihydrolipoyl dehydrogenase (pdhD) from Acholeplasma laidlawii.